We begin with the raw amino-acid sequence, 302 residues long: Spheroidin-like protein (302 aa).

The first 19 residues, 1 to 19 (MIALLIALFAAIHAPAVRS), serve as a signal peptide directing secretion. N-linked (GlcNAc...) asparagine; by host glycans are attached at residues N193 and N293.

Homodimer; disulfide-linked.

It localises to the host membrane. Functionally, component of the virus occlusion bodies, which are large proteinaceous structures (polyhedra), that protect the virus from the outside environment for extended periods until they are ingested by insect larvae. The chain is Spheroidin-like protein (SLP) from Autographa californica nuclear polyhedrosis virus (AcMNPV).